Consider the following 61-residue polypeptide: UPF0434 protein TM1040_0056 (61 aa).

It belongs to the UPF0434 family.

The sequence is that of UPF0434 protein TM1040_0056 from Ruegeria sp. (strain TM1040) (Silicibacter sp.).